The primary structure comprises 129 residues: Small ribosomal subunit protein eS8 (129 aa).

Residues 1-29 form a disordered region; sequence MSVWQGRSRRKPTGGLYRPARKKRKYEMG.

This sequence belongs to the eukaryotic ribosomal protein eS8 family. In terms of assembly, part of the 30S ribosomal subunit.

The protein is Small ribosomal subunit protein eS8 (rps8e) of Methanocaldococcus jannaschii (strain ATCC 43067 / DSM 2661 / JAL-1 / JCM 10045 / NBRC 100440) (Methanococcus jannaschii).